We begin with the raw amino-acid sequence, 886 residues long: MTSQLIKKIVTGDEIRNAFLKFYSEKLHKIIPSASLIPDDPTVMLTIAGMLPFKPVFLGLKERPSKRATSSQKCIRTNDIENVGVTARHHTFFEMLGNFSFGDYFKREAIQWAWELVTNIYQLSVENIIVSVFHEDEESAKIWRDEIGIHPDRIVKLGEEDNFWSSGKTGPCGPCSELYYDFHPEKGLQNIDLEDGDRFIEFYNLVFMQYNRDSNGKLTDLKFKNIDTGMGLERMAQILQEKQNNYETDLIFPIIQKICEIANIDYFSSDDKNKISLKIIGDHTRAVIHLISDGVAASNLGRGYILRRLIRRMVRHGRLLGITNEFLPHIATVGINLMQNNYPDLKNNNDLILNEIKIEEIRFRETLERGEKLLDELISSGQKLISGFKAFELYDTYGFPLELTVEIAEENSISVDVKGFEEEMNAQKERAKAASSNIDLTLEGSLEREIDLFNKTVFNGYDLLLSEAEIKGIFLDSTLVKQASEGQKVLIVLDQTTFYGESGGQVGDIGTIFSKDLEVLVDNVMRKKNVFLHYGTIKKGILTIGQKVKTNVSSSNRAKAAANHTATHLLQSALKSVVNESVGQKGSLVAFNKLRFDFNSSNPISKDQISKIETLVNSWIMENHALEIKNMSKSEALEKGAVAMFGEKYDDEVRVVNVPGVSMELCGGTHVKTTSELGSFKIISEEGISAGVRRIEALSGQSALDYFSDRNALVNQLSDLLKANPNQLFERVNNLQAELINKNKEIQKMKDEIAYFKYSSIKSSAEIVNSFSILVNQIDGLDGNSLQSAALNLTSHLGNKAIVILGGIPNPENRKLLFVVSLGDDPVKIGLHAGKIINEIARICSGGGGGKPNFAQAGAKDIDKLSDALDYAKNYLQKTLDSHSDK.

Positions 564, 568, 666, and 670 each coordinate Zn(2+).

This sequence belongs to the class-II aminoacyl-tRNA synthetase family. Zn(2+) serves as cofactor.

The protein resides in the cytoplasm. The catalysed reaction is tRNA(Ala) + L-alanine + ATP = L-alanyl-tRNA(Ala) + AMP + diphosphate. Catalyzes the attachment of alanine to tRNA(Ala) in a two-step reaction: alanine is first activated by ATP to form Ala-AMP and then transferred to the acceptor end of tRNA(Ala). Also edits incorrectly charged Ser-tRNA(Ala) and Gly-tRNA(Ala) via its editing domain. This chain is Alanine--tRNA ligase, found in Prochlorococcus marinus (strain MIT 9312).